The following is a 1241-amino-acid chain: Anion exchange protein 2 (1241 aa).

The tract at residues 1–240 is disordered; the sequence is MSSAPRRPAK…RSYNLQERRR (240 aa). Residues 1 to 707 are Cytoplasmic-facing; it reads MSSAPRRPAK…SDFRDALDPQ (707 aa). 2 stretches are compositionally biased toward basic and acidic residues: residues 37 to 49 and 58 to 75; these read ELHR…RFEE and GGEE…EYHR. 2 stretches are compositionally biased toward basic residues: residues 76–85 and 94–110; these read QSSHHIHHPL and RRRK…RRRP. Phosphoserine is present on residues Ser-113, Ser-132, Ser-144, Ser-170, Ser-172, and Ser-173. Positions 120-133 are enriched in acidic residues; the sequence is TIEEGEEDEDEASE. The span at 141 to 155 shows a compositional bias: low complexity; it reads TQPSPVSTPSSVQFF. Thr-183 bears the Phosphothreonine mark. Over residues 189 to 209 the composition is skewed to low complexity; that stretch reads GAQAGTQVEEAEAEAVAVASG. Over residues 210–219 the composition is skewed to gly residues; sequence TAGGDDGGAS. Ser-243 is modified (phosphoserine). At Thr-257 the chain carries Phosphothreonine. N6-methyllysine is present on Lys-274. Residues 288–320 are disordered; sequence LVRKNAKGSTQSGREGREPGPTPRARPRAPHKP. The residue at position 443 (Ser-443) is a Phosphoserine. The disordered stretch occupies residues 449–471; that stretch reads SLLGHHHGQGAESDPHVTEPLMG. The next 4 membrane-spanning stretches (helical) occupy residues 708–731, 737–774, 784–816, and 826–847; these read CLAA…GLLG, LIGV…LLVF, SNHL…SFLV, and IFAF…VKIF. Residues 708-1241 are membrane (anion exchange); that stretch reads CLAAVIFIYF…DEYNEMPMPV (534 aa). The Extracellular portion of the chain corresponds to 848 to 900; sequence QEHPLHGCSASNSSEVDGGENMTWAGARPTLGPGNRSLAGQSGQGKPRGQPNT. N-linked (GlcNAc...) asparagine glycosylation is found at Asn-859, Asn-868, and Asn-882. Residues 901–918 form a helical membrane-spanning segment; the sequence is ALLSLVLMAGTFFIAFFL. The Cytoplasmic portion of the chain corresponds to 919–933; it reads RKFKNSRFFPGRIRR. The next 5 membrane-spanning stretches (helical) occupy residues 934–954, 988–1010, 1036–1059, 1091–1136, and 1163–1199; these read VIGD…DYSI, PFPV…LIFM, LLLI…AATV, VTGL…IQFY, and MHLF…TVPL. Cys-1173 carries the S-palmitoyl cysteine lipid modification.

This sequence belongs to the anion exchanger (TC 2.A.31) family. In terms of tissue distribution, expressed in the liver, stomach, kidney, prostate, thyroid and rectum. As to expression, expressed in the liver and kidney.

It is found in the apical cell membrane. It localises to the basolateral cell membrane. The enzyme catalyses hydrogencarbonate(in) + chloride(out) = hydrogencarbonate(out) + chloride(in). Functionally, sodium-independent anion exchanger which mediates the electroneutral exchange of chloride for bicarbonate ions across the cell membrane. Plays an important role in osteoclast differentiation and function. Regulates bone resorption and calpain-dependent actin cytoskeleton organization in osteoclasts via anion exchange-dependent control of pH. Essential for intracellular pH regulation in CD8(+) T-cells upon CD3 stimulation, modulating CD8(+) T-cell responses. This chain is Anion exchange protein 2 (SLC4A2), found in Homo sapiens (Human).